The primary structure comprises 447 residues: Exodeoxyribonuclease 7 large subunit (447 aa).

The protein belongs to the XseA family. As to quaternary structure, heterooligomer composed of large and small subunits.

It localises to the cytoplasm. It catalyses the reaction Exonucleolytic cleavage in either 5'- to 3'- or 3'- to 5'-direction to yield nucleoside 5'-phosphates.. Bidirectionally degrades single-stranded DNA into large acid-insoluble oligonucleotides, which are then degraded further into small acid-soluble oligonucleotides. The protein is Exodeoxyribonuclease 7 large subunit of Geobacter sulfurreducens (strain ATCC 51573 / DSM 12127 / PCA).